The following is a 196-amino-acid chain: Imidazole glycerol phosphate synthase subunit HisH (196 aa).

The Glutamine amidotransferase type-1 domain maps to 2-196; that stretch reads DVVILDTGCA…AQLMKNFLEM (195 aa). Cysteine 77 serves as the catalytic Nucleophile. Residues histidine 178 and glutamate 180 contribute to the active site.

In terms of assembly, heterodimer of HisH and HisF.

The protein resides in the cytoplasm. It carries out the reaction 5-[(5-phospho-1-deoxy-D-ribulos-1-ylimino)methylamino]-1-(5-phospho-beta-D-ribosyl)imidazole-4-carboxamide + L-glutamine = D-erythro-1-(imidazol-4-yl)glycerol 3-phosphate + 5-amino-1-(5-phospho-beta-D-ribosyl)imidazole-4-carboxamide + L-glutamate + H(+). The catalysed reaction is L-glutamine + H2O = L-glutamate + NH4(+). Its pathway is amino-acid biosynthesis; L-histidine biosynthesis; L-histidine from 5-phospho-alpha-D-ribose 1-diphosphate: step 5/9. Functionally, IGPS catalyzes the conversion of PRFAR and glutamine to IGP, AICAR and glutamate. The HisH subunit catalyzes the hydrolysis of glutamine to glutamate and ammonia as part of the synthesis of IGP and AICAR. The resulting ammonia molecule is channeled to the active site of HisF. The sequence is that of Imidazole glycerol phosphate synthase subunit HisH from Yersinia pestis.